The chain runs to 132 residues: Agouti-signaling protein (132 aa).

The signal sequence occupies residues 1–22 (MDVTRLLLATLLVFLCFFTAYS). The N-linked (GlcNAc...) asparagine glycan is linked to Asn39. A disordered region spans residues 61-87 (QISRKEAEKKRSSKKEASMKKVARPRT). Residues 63 to 79 (SRKEAEKKRSSKKEASM) show a composition bias toward basic and acidic residues. 5 cysteine pairs are disulfide-bonded: Cys93–Cys108, Cys100–Cys114, Cys107–Cys125, Cys111–Cys132, and Cys116–Cys123. One can recognise an Agouti domain in the interval 93–132 (CVATRDSCKPPAPACCDPCAFCQCRFFRSACSCRVLSLNC).

The protein resides in the secreted. Involved in the regulation of melanogenesis. The binding of ASP to MC1R precludes alpha-MSH initiated signaling and thus blocks production of cAMP, leading to a down-regulation of eumelanogenesis (brown/black pigment) and thus increasing synthesis of pheomelanin (yellow/red pigment). The protein is Agouti-signaling protein (ASIP) of Macaca hecki (Heck's macaque).